Here is a 373-residue protein sequence, read N- to C-terminus: Type II secretion system protein L (373 aa).

Residues 1–214 (MTAWRDTLGR…RRSDPMQRWN (214 aa)) lie on the Cytoplasmic side of the membrane. A helical membrane pass occupies residues 215-233 (LLLAVAALVLLAVAGWLLL). The Periplasmic segment spans residues 234 to 373 (DNRRQAADDL…AKEAADAAQR (140 aa)).

The protein belongs to the GSP L family. Type II secretion system is composed of four main components: the outer membrane complex, the inner membrane complex, the cytoplasmic secretion ATPase and the periplasm-spanning pseudopilus. Forms homodimers. Interacts with XpsM/GspM. Interacts with XpsE/GspE and XpsF/GspF.

Its subcellular location is the cell inner membrane. Inner membrane component of the type II secretion system required for the energy-dependent secretion of extracellular factors such as proteases and toxins from the periplasm. Plays a role in the complex assembly and recruits XpsM resulting in a stable complex in the inner membrane. Provides thus a link between the energy-providing XpsE protein in the cytoplasm and the rest of the T2SS machinery. In Xanthomonas campestris pv. campestris (strain ATCC 33913 / DSM 3586 / NCPPB 528 / LMG 568 / P 25), this protein is Type II secretion system protein L (pefL).